The following is a 260-amino-acid chain: HLA class II histocompatibility antigen, DP alpha 1 chain (260 aa).

The N-terminal stretch at 1–28 (MRPEDRMFHIRAVILRALSLAFLLSLRG) is a signal peptide. The alpha-1 stretch occupies residues 29–115 (AGAIKADHVS…QRSNHTQATN (87 aa)). Residues 29 to 222 (AGAIKADHVS…EPIQMPETTE (194 aa)) lie on the Extracellular side of the membrane. N-linked (GlcNAc...) asparagine glycosylation is found at asparagine 109 and asparagine 149. An alpha-2 region spans residues 116 to 209 (DPPEVTVFPK…GLDQPLLKHW (94 aa)). The Ig-like C1-type domain occupies 118–210 (PEVTVFPKEP…LDQPLLKHWE (93 aa)). A disulfide bridge links cysteine 138 with cysteine 194. The interval 210–222 (EAQEPIQMPETTE) is connecting peptide. Residues 223–245 (TVLCALGLVLGLVGIIVGTVLII) form a helical membrane-spanning segment. Residues 246–260 (KSLRSGHDPRAQGTL) are Cytoplasmic-facing.

This sequence belongs to the MHC class II family. Heterodimer of an alpha and a beta subunit; also referred as MHC class II molecule. In the endoplasmic reticulum (ER) it forms a heterononamer; 3 MHC class II molecules bind to a CD74 homotrimer (also known as invariant chain or HLA class II histocompatibility antigen gamma chain). In the endosomal/lysosomal system; CD74 undergoes sequential degradation by various proteases; leaving a small fragment termed CLIP on each MHC class II molecule. MHC class II molecule interacts with HLA_DM, and HLA_DO in B-cells, in order to release CLIP and facilitate the binding of antigenic peptides.

The protein resides in the cell membrane. It localises to the endoplasmic reticulum membrane. Its subcellular location is the golgi apparatus. It is found in the trans-Golgi network membrane. The protein localises to the endosome membrane. The protein resides in the lysosome membrane. Its function is as follows. Binds peptides derived from antigens that access the endocytic route of antigen presenting cells (APC) and presents them on the cell surface for recognition by the CD4 T-cells. The peptide binding cleft accommodates peptides of 10-30 residues. The peptides presented by MHC class II molecules are generated mostly by degradation of proteins that access the endocytic route, where they are processed by lysosomal proteases and other hydrolases. Exogenous antigens that have been endocytosed by the APC are thus readily available for presentation via MHC II molecules, and for this reason this antigen presentation pathway is usually referred to as exogenous. As membrane proteins on their way to degradation in lysosomes as part of their normal turn-over are also contained in the endosomal/lysosomal compartments, exogenous antigens must compete with those derived from endogenous components. Autophagy is also a source of endogenous peptides, autophagosomes constitutively fuse with MHC class II loading compartments. In addition to APCs, other cells of the gastrointestinal tract, such as epithelial cells, express MHC class II molecules and CD74 and act as APCs, which is an unusual trait of the GI tract. To produce a MHC class II molecule that presents an antigen, three MHC class II molecules (heterodimers of an alpha and a beta chain) associate with a CD74 trimer in the ER to form a heterononamer. Soon after the entry of this complex into the endosomal/lysosomal system where antigen processing occurs, CD74 undergoes a sequential degradation by various proteases, including CTSS and CTSL, leaving a small fragment termed CLIP (class-II-associated invariant chain peptide). The removal of CLIP is facilitated by HLA-DM via direct binding to the alpha-beta-CLIP complex so that CLIP is released. HLA-DM stabilizes MHC class II molecules until primary high affinity antigenic peptides are bound. The MHC II molecule bound to a peptide is then transported to the cell membrane surface. In B-cells, the interaction between HLA-DM and MHC class II molecules is regulated by HLA-DO. Primary dendritic cells (DCs) also to express HLA-DO. Lysosomal microenvironment has been implicated in the regulation of antigen loading into MHC II molecules, increased acidification produces increased proteolysis and efficient peptide loading. The chain is HLA class II histocompatibility antigen, DP alpha 1 chain (HLA-DPA1) from Homo sapiens (Human).